The following is a 378-amino-acid chain: Cytochrome b (378 aa).

A run of 4 helical transmembrane segments spans residues 33–53 (FGSLLGACLMIQITTGLFLAM), 77–98 (WMIRLLHANGASMFFVCLFLHT), 113–133 (WNIGTILLLMTMATAFMGYVL), and 178–198 (FFTFHFILPFIITALATIHLL). His-83 and His-97 together coordinate heme b. Heme b is bound by residues His-182 and His-196. His-201 serves as a coordination point for a ubiquinone. 4 helical membrane-spanning segments follow: residues 226–246 (TKDIFGLTLLLLLLTSLTLFT), 288–308 (LGGVLALLLSIMILTIIPATH), 320–340 (ITQILFWTLAADLLTLTWIGG), and 347–366 (FEAIGQTASIAYFLIITLIP).

This sequence belongs to the cytochrome b family. As to quaternary structure, the cytochrome bc1 complex contains 11 subunits: 3 respiratory subunits (MT-CYB, CYC1 and UQCRFS1), 2 core proteins (UQCRC1 and UQCRC2) and 6 low-molecular weight proteins (UQCRH/QCR6, UQCRB/QCR7, UQCRQ/QCR8, UQCR10/QCR9, UQCR11/QCR10 and a cleavage product of UQCRFS1). This cytochrome bc1 complex then forms a dimer. It depends on heme b as a cofactor.

The protein resides in the mitochondrion inner membrane. Functionally, component of the ubiquinol-cytochrome c reductase complex (complex III or cytochrome b-c1 complex) that is part of the mitochondrial respiratory chain. The b-c1 complex mediates electron transfer from ubiquinol to cytochrome c. Contributes to the generation of a proton gradient across the mitochondrial membrane that is then used for ATP synthesis. The polypeptide is Cytochrome b (MT-CYB) (Cebus albifrons (White-fronted capuchin)).